The chain runs to 690 residues: Elongation factor G (690 aa).

Residues 8–283 (EDYRNFGIMA…AVVDYLPSPV (276 aa)) form the tr-type G domain. Residues 17–24 (AHIDAGKT), 81–85 (DTPGH), and 135–138 (NKMD) each bind GTP.

Belongs to the TRAFAC class translation factor GTPase superfamily. Classic translation factor GTPase family. EF-G/EF-2 subfamily.

It is found in the cytoplasm. Functionally, catalyzes the GTP-dependent ribosomal translocation step during translation elongation. During this step, the ribosome changes from the pre-translocational (PRE) to the post-translocational (POST) state as the newly formed A-site-bound peptidyl-tRNA and P-site-bound deacylated tRNA move to the P and E sites, respectively. Catalyzes the coordinated movement of the two tRNA molecules, the mRNA and conformational changes in the ribosome. The chain is Elongation factor G from Rhodopseudomonas palustris (strain BisB5).